A 362-amino-acid polypeptide reads, in one-letter code: Quinolone epoxide rearrangement protein penF (362 aa).

Histidine 220 is an active-site residue. Glutamate 222 serves as the catalytic Broensted acid.

It belongs to the quinolone epoxide rearrangement protein penF family.

It carries out the reaction [(1'E)-5'-(3',3'-dimethyloxiran-2'-yl)-3'-hydroxy-3'-methylpent-1'-en-1'-yl]-quinolinone B = yaequinolone D. Its pathway is secondary metabolite biosynthesis. The protein operates within alkaloid biosynthesis. It participates in mycotoxin biosynthesis. In terms of biological role, quinolone epoxide rearrangement protein; part of the gene cluster that mediates the biosynthesis of penigequinolones, potent insecticidal alkaloids that contain a highly modified 10-carbon prenyl group. The first stage is catalyzed by the nonribosomal peptide synthetase penN that condenses anthranilic acid and O-methyl-L-tyrosine to produce 4'-methoxycyclopeptin. 4'-methoxycyclopeptin is then converted to 4'-methoxydehydrocyclopeptin by the ketoglutarate-dependent dioxygenase penM through dehydrogenation to form a double bond between C-alpha and C-beta of the O-methyltyrosine side chain. PenM also converts its first product methoxydehydrocyclopeptin to 4'-methoxycyclopenin. The following conversion of 4'methoxycyclopenin into 4'-methoxyviridicatin is catalyzed by the cyclopenase penL. 4'-methoxyviridicatin is the precursor of quinolone natural products, and is further converted to quinolinone B. The prenyltransferase penI then catalyzes the canonical Friedel-Crafts alkylation of quinolinone B with dimethylallyl cation to yield dimethylallyl quinolone, which is subjected to FAD-dependent dehydrogenation by the FAD-linked oxidoreductase penH to yield conjugated aryl diene. The delta(3') double bond then serves as the site of the second alkylation with DMAPP catalyzed by the prenyltransferase penG to yield a carbenium ion intermediate, which can be attacked by H(2)O to yield a styrenyl quinolone containing a C3'-hydroxyprenyl chain, or undergo cyclization to yield yaequinolones J1 and J2. The conversion of the styrenyl quinolone into the tetrahydrofuran-containing yaequinolone C is performed by the FAD-dependent monooxygenase penE and involves epoxidation of the terminal C7'-C8' olefin, followed by epoxide ring opening initiated by the C3' hydroxyl group. The predicted cysteine hydrolase penJ acts as an epoxide hydrolase that enhances the rate of the 5-exo-tet cyclization step, increasing the yield of yaequinolone C. PenF catalyzes the cationic rearrangement of the epoxide formed by penE (before ring opening to produce yaequinolone C) into yaequinolone D. Finally, the short-chain dehydrogenase/reductase (SDR)-like reductase penD, catalyzes both the dehydration of yaequinolone D and the reduction of the resulting oxonium to yield penigequinolone. The chain is Quinolone epoxide rearrangement protein penF from Penicillium thymicola.